The primary structure comprises 586 residues: Probable riboflavin import ATP-binding protein RfuB (586 aa).

ABC transporter domains are found at residues 46–299 (RAVD…NECI) and 343–586 (LRVE…DSHT). 89–96 (GKNGAGKS) contacts ATP.

It belongs to the ABC transporter superfamily. The complex is probably composed of two ATP-binding proteins (RfuB), two transmembrane proteins (RfuC and RfuD) and a solute-binding protein (RfuA).

The protein localises to the cell inner membrane. In terms of biological role, probably part of the ABC transporter complex RfuABCD involved in riboflavin import. Probably responsible for energy coupling to the transport system. This chain is Probable riboflavin import ATP-binding protein RfuB, found in Treponema pallidum (strain Nichols).